The chain runs to 228 residues: Core-capsid bridging protein (228 aa).

The tract at residues 146–177 is disordered; it reads ARPPAARISPPRRRRRRRRSPRPRATAAYRSS. Positions 155–167 are enriched in basic residues; it reads PPRRRRRRRRSPR. Low complexity predominate over residues 168–177; the sequence is PRATAAYRSS.

The protein belongs to the adenoviridae core-capsid bridging protein family. Monomer. Homodimer. Exists in equilibrium between monomers and dimers in solution. Interacts with the histone-like nucleoprotein; this interactions bridge the virus core to the capsid. Interacts with core protein X; this interactions bridge the virus core to the capsid. Interacts with the endosome lysis protein VI; this interactions bridge the virus core to the capsid. Interacts with the peripentonal hexons. Interacts with host NPM1; this interaction might play a role in virus assembly.

The protein localises to the virion. It is found in the host nucleus. It localises to the host nucleolus. Its function is as follows. Associates loosely with the viral DNA to form an outer shell around the nucleoprotein-DNA complex and links it with the capsid by binding the endosome lysis protein. Dissociates from the viral genome during entry. Might be involved in nuclear capsid assembly of the viral particles through its association with NPM1/nucleophosmin. The polypeptide is Core-capsid bridging protein (Murine adenovirus A serotype 1 (MAdV-1)).